The primary structure comprises 99 residues: ATP-dependent Clp protease adapter protein ClpS (99 aa).

Belongs to the ClpS family. In terms of assembly, binds to the N-terminal domain of the chaperone ClpA.

Functionally, involved in the modulation of the specificity of the ClpAP-mediated ATP-dependent protein degradation. The protein is ATP-dependent Clp protease adapter protein ClpS of Helicobacter hepaticus (strain ATCC 51449 / 3B1).